The following is a 374-amino-acid chain: DNA replication and repair protein RecF (374 aa).

30 to 37 (GHNAQGKT) lines the ATP pocket.

Belongs to the RecF family.

It localises to the cytoplasm. Its function is as follows. The RecF protein is involved in DNA metabolism; it is required for DNA replication and normal SOS inducibility. RecF binds preferentially to single-stranded, linear DNA. It also seems to bind ATP. In Limosilactobacillus reuteri (strain DSM 20016) (Lactobacillus reuteri), this protein is DNA replication and repair protein RecF.